A 627-amino-acid polypeptide reads, in one-letter code: Pentatricopeptide repeat-containing protein At2g15630, mitochondrial (627 aa).

The transit peptide at 1–29 directs the protein to the mitochondrion; sequence MRRFTVPCILRHRISILSGAGYSPAAARL. PPR repeat units lie at residues 154 to 188, 189 to 223, 224 to 258, 259 to 293, 294 to 324, 326 to 360, 361 to 395, 396 to 430, 431 to 465, 466 to 500, 501 to 535, 536 to 570, and 571 to 605; these read STILFDLLVRCCCQLRMVDEAIECFYLMKEKGFYP, KTETCNHILTLLSRLNRIENAWVFYADMYRMEIKS, NVYTFNIMINVLCKEGKLKKAKGFLGIMEVFGIKP, TIVTYNTLVQGFSLRGRIEGARLIISEMKSKGFQP, DMQTYNPILSWMCNEGRASEVLREMKEIGLV, DSVSYNILIRGCSNNGDLEMAFAYRDEMVKQGMVP, TFYTYNTLIHGLFMENKIEAAEILIREIREKGIVL, DSVTYNILINGYCQHGDAKKAFALHDEMMTDGIQP, TQFTYTSLIYVLCRKNKTREADELFEKVVGKGMKP, DLVMMNTLMDGHCAIGNMDRAFSLLKEMDMMSINP, DDVTYNCLMRGLCGEGKFEEARELMGEMKRRGIKP, DHISYNTLISGYSKKGDTKHAFMVRDEMLSLGFNP, and TLLTYNALLKGLSKNQEGELAEELLREMKSEGIVP.

Belongs to the PPR family. P subfamily.

It is found in the mitochondrion. The protein is Pentatricopeptide repeat-containing protein At2g15630, mitochondrial of Arabidopsis thaliana (Mouse-ear cress).